The chain runs to 227 residues: Probable septum site-determining protein MinC (227 aa).

The protein belongs to the MinC family. As to quaternary structure, interacts with MinD and FtsZ.

Cell division inhibitor that blocks the formation of polar Z ring septums. Rapidly oscillates between the poles of the cell to destabilize FtsZ filaments that have formed before they mature into polar Z rings. Prevents FtsZ polymerization. This Laribacter hongkongensis (strain HLHK9) protein is Probable septum site-determining protein MinC.